The sequence spans 504 residues: MDEFQRYGNKHKSWQQCFLYPLFFREDLYTIAHDLYLDKSSSSEPTELSISNFFSFPTVKRLIRRIRQQNDSNSIGLFRNCDPNRFINRNRNSYSELVLEGLTVILEVSLAMQSKHFIEGMDGWKSIRSIHCIFTLMEDKFPYSNYVSDIRVPYSIHPEILVRTFRRWIRDAPSLHLLRSILHEWRNSFSAENLQKALVPPRENRRFSLFLWNSYVYECESFLVSLLKQFYHSRSLLYGSFPDRTHFDKKIKHIIIFPVKISTKRIWLLKYPFIYYVRYGERSLIALKGTHLQVKRCRYHLFNFWQYYFHLWSQPYRVCILELSKIYFYFLGHFLSFKMKTLVVRTKMLDDLLISDIIANEFNPIAPIRSILLYLTKERFCDISGQPISRLSWTNLSDDDILDRFDRMCRNLFHYYSGSINKDSLYHIKYILLLSCAKTLACKHKSTIRLVREEPGSELFTKSFSKEREFIYSSFSKTRSQRERIWNSDILQINPLANSYTINK.

Belongs to the intron maturase 2 family. MatK subfamily.

It is found in the plastid. The protein localises to the chloroplast. Functionally, usually encoded in the trnK tRNA gene intron. Probably assists in splicing its own and other chloroplast group II introns. This Taxus baccata (English yew) protein is Maturase K.